A 192-amino-acid polypeptide reads, in one-letter code: Probable nicotinate-nucleotide adenylyltransferase (192 aa).

Belongs to the NadD family.

The catalysed reaction is nicotinate beta-D-ribonucleotide + ATP + H(+) = deamido-NAD(+) + diphosphate. Its pathway is cofactor biosynthesis; NAD(+) biosynthesis; deamido-NAD(+) from nicotinate D-ribonucleotide: step 1/1. In terms of biological role, catalyzes the reversible adenylation of nicotinate mononucleotide (NaMN) to nicotinic acid adenine dinucleotide (NaAD). In Staphylococcus haemolyticus (strain JCSC1435), this protein is Probable nicotinate-nucleotide adenylyltransferase.